The sequence spans 705 residues: Polyribonucleotide nucleotidyltransferase (705 aa).

Mg(2+)-binding residues include D494 and D500. In terms of domain architecture, KH spans 561–620 (PRITTVKVKPEKVRAVIGTGGKNIRQIVSETGVTIDVEDDGTVTIASSDMEASARAIAMV). Positions 630 to 698 (GKIYRGTVKK…KQGKIRLSRK (69 aa)) constitute an S1 motif domain.

It belongs to the polyribonucleotide nucleotidyltransferase family. It depends on Mg(2+) as a cofactor.

The protein resides in the cytoplasm. The catalysed reaction is RNA(n+1) + phosphate = RNA(n) + a ribonucleoside 5'-diphosphate. Its function is as follows. Involved in mRNA degradation. Catalyzes the phosphorolysis of single-stranded polyribonucleotides processively in the 3'- to 5'-direction. The chain is Polyribonucleotide nucleotidyltransferase from Syntrophus aciditrophicus (strain SB).